A 406-amino-acid chain; its full sequence is Propionate kinase (406 aa).

Residues asparagine 11 and lysine 18 each coordinate ATP. Asparagine 11 provides a ligand contact to Mg(2+). Arginine 86 serves as a coordination point for substrate. The Proton donor/acceptor role is filled by aspartate 143. Residues histidine 175, 203-207 (HLGNG), 278-280 (DMR), and 326-330 (GIGEN) contribute to the ATP site.

The protein belongs to the acetokinase family. TdcD subfamily. In terms of assembly, homodimer. Requires Mg(2+) as cofactor.

The enzyme catalyses propanoate + ATP = propanoyl phosphate + ADP. The protein operates within amino-acid degradation; L-threonine degradation via propanoate pathway; propanoate from L-threonine: step 4/4. Functionally, catalyzes the conversion of propionyl phosphate and ADP to propionate and ATP. The chain is Propionate kinase from Yersinia enterocolitica serotype O:8 / biotype 1B (strain NCTC 13174 / 8081).